Reading from the N-terminus, the 102-residue chain is Large ribosomal subunit protein uL24 (102 aa).

The protein belongs to the universal ribosomal protein uL24 family. Part of the 50S ribosomal subunit.

Functionally, one of two assembly initiator proteins, it binds directly to the 5'-end of the 23S rRNA, where it nucleates assembly of the 50S subunit. One of the proteins that surrounds the polypeptide exit tunnel on the outside of the subunit. The sequence is that of Large ribosomal subunit protein uL24 from Cupriavidus metallidurans (strain ATCC 43123 / DSM 2839 / NBRC 102507 / CH34) (Ralstonia metallidurans).